The primary structure comprises 96 residues: Co-chaperonin GroES (96 aa).

The protein belongs to the GroES chaperonin family. As to quaternary structure, heptamer of 7 subunits arranged in a ring. Interacts with the chaperonin GroEL.

Its subcellular location is the cytoplasm. In terms of biological role, together with the chaperonin GroEL, plays an essential role in assisting protein folding. The GroEL-GroES system forms a nano-cage that allows encapsulation of the non-native substrate proteins and provides a physical environment optimized to promote and accelerate protein folding. GroES binds to the apical surface of the GroEL ring, thereby capping the opening of the GroEL channel. The protein is Co-chaperonin GroES of Buchnera aphidicola subsp. Myzus persicae (Myzus persicae primary endosymbiont).